The sequence spans 289 residues: tRNA dimethylallyltransferase (289 aa).

An ATP-binding site is contributed by 9-16 (GTTASGKT). 11–16 (TASGKT) is a binding site for substrate. Residues 34 to 37 (DSLC) are interaction with substrate tRNA.

Belongs to the IPP transferase family. Monomer. Mg(2+) serves as cofactor.

The enzyme catalyses adenosine(37) in tRNA + dimethylallyl diphosphate = N(6)-dimethylallyladenosine(37) in tRNA + diphosphate. Catalyzes the transfer of a dimethylallyl group onto the adenine at position 37 in tRNAs that read codons beginning with uridine, leading to the formation of N6-(dimethylallyl)adenosine (i(6)A). The polypeptide is tRNA dimethylallyltransferase (Campylobacter jejuni (strain RM1221)).